Reading from the N-terminus, the 423-residue chain is UPF0229 protein Pput_0430 (423 aa).

The interval 81 to 108 (EFTAGEHIPRPQGGGGGGGRGKAGNSGE) is disordered. Gly residues predominate over residues 92–107 (QGGGGGGGRGKAGNSG).

Belongs to the UPF0229 family.

This is UPF0229 protein Pput_0430 from Pseudomonas putida (strain ATCC 700007 / DSM 6899 / JCM 31910 / BCRC 17059 / LMG 24140 / F1).